A 386-amino-acid polypeptide reads, in one-letter code: Leupaxin (386 aa).

Residue Met1 is modified to N-acetylmethionine. The LD motif 1 signature appears at 3-15 (ELDALLEELERST). Residues 12-51 (ERSTLQDSDEYSNSAPLPLDQSSRKESNLDETSKMLSVQD) are disordered. A compositionally biased stretch (polar residues) spans 16-26 (LQDSDEYSNSA). The residue at position 19 (Ser19) is a Phosphoserine. Tyr22 is modified (phosphotyrosine). Positions 33-44 (SSRKESNLDETS) are enriched in basic and acidic residues. At Tyr62 the chain carries Phosphotyrosine. Short sequence motifs (LD motif) lie at residues 70–82 (NVYS…KKSP) and 92–103 (QLDELMAHLSEM). Tyr72 carries the post-translational modification Phosphotyrosine; by LYN. Ser81 carries the post-translational modification Phosphoserine. 4 LIM zinc-binding domains span residues 150-209 (GHCA…LFSP), 210-267 (RCAY…AMFS), 268-327 (PKCG…RRGT), and 328-386 (LCHG…LFSL).

The protein belongs to the paxillin family. In terms of assembly, interacts with unphosphorylated ITGA4. Interacts with AR and SRF. Interacts with PTK2B/PYK2, PTPN22 and PTPN12. Interacts (via LD motif 3) with LYN and the interaction is induced upon B-cell antigen receptor (BCR) activation. Interacts (via LD motif 3) with PTK2/FAK. In terms of processing, phosphorylated on tyrosine residues. Phosphorylation on Tyr-72 is important for its inhibitory function. Bombesin stimulates phosphorylation on Tyr-22, Tyr-62 and Tyr-72.

The protein resides in the cytoplasm. It is found in the cell junction. It localises to the focal adhesion. Its subcellular location is the nucleus. The protein localises to the perinuclear region. The protein resides in the cell projection. It is found in the podosome. It localises to the cell membrane. Functionally, transcriptional coactivator for androgen receptor (AR) and serum response factor (SRF). Contributes to the regulation of cell adhesion, spreading and cell migration and acts as a negative regulator in integrin-mediated cell adhesion events. Suppresses the integrin-induced tyrosine phosphorylation of paxillin (PXN). May play a critical role as an adapter protein in the formation of the adhesion zone in osteoclasts. Negatively regulates B-cell antigen receptor (BCR) signaling. This Oryctolagus cuniculus (Rabbit) protein is Leupaxin (LPXN).